The primary structure comprises 90 residues: Small ribosomal subunit protein uS17 (90 aa).

It belongs to the universal ribosomal protein uS17 family. In terms of assembly, part of the 30S ribosomal subunit.

One of the primary rRNA binding proteins, it binds specifically to the 5'-end of 16S ribosomal RNA. The polypeptide is Small ribosomal subunit protein uS17 (Burkholderia thailandensis (strain ATCC 700388 / DSM 13276 / CCUG 48851 / CIP 106301 / E264)).